We begin with the raw amino-acid sequence, 87 residues long: MDLPSHSINAMKSMEVIDINTGTKLGLIKDLKIDTEEYKVISIILPGSKVGGWFSKGNDIEIDWTDIQKIGVDVILVNGDNLFVNKD.

It belongs to the YlmC/YmxH family.

This is an uncharacterized protein from Clostridium acetobutylicum (strain ATCC 824 / DSM 792 / JCM 1419 / IAM 19013 / LMG 5710 / NBRC 13948 / NRRL B-527 / VKM B-1787 / 2291 / W).